Here is a 362-residue protein sequence, read N- to C-terminus: Aminomethyltransferase (362 aa).

The protein belongs to the GcvT family. As to quaternary structure, the glycine cleavage system is composed of four proteins: P, T, L and H.

It carries out the reaction N(6)-[(R)-S(8)-aminomethyldihydrolipoyl]-L-lysyl-[protein] + (6S)-5,6,7,8-tetrahydrofolate = N(6)-[(R)-dihydrolipoyl]-L-lysyl-[protein] + (6R)-5,10-methylene-5,6,7,8-tetrahydrofolate + NH4(+). In terms of biological role, the glycine cleavage system catalyzes the degradation of glycine. The polypeptide is Aminomethyltransferase (Chlorobium limicola (strain DSM 245 / NBRC 103803 / 6330)).